An 86-amino-acid polypeptide reads, in one-letter code: Omega-theraphotoxin-Hhn1a 1 (86 aa).

The first 21 residues, M1–A21, serve as a signal peptide directing secretion. Positions S22 to R50 are excised as a propeptide. Intrachain disulfides connect C52–C66, C59–C71, and C65–C78.

This sequence belongs to the neurotoxin 10 (Hwtx-1) family. 17 (Hntx-9) subfamily. In terms of tissue distribution, expressed by the venom gland.

It is found in the secreted. Its function is as follows. Ion channel inhibitor. This Cyriopagopus hainanus (Chinese bird spider) protein is Omega-theraphotoxin-Hhn1a 1.